The primary structure comprises 379 residues: Queuine tRNA-ribosyltransferase (379 aa).

The active-site Proton acceptor is aspartate 91. Residues 91-95 (DSGGF), aspartate 145, glutamine 189, and glycine 216 contribute to the substrate site. The tract at residues 247–253 (GVGKPED) is RNA binding. The active-site Nucleophile is aspartate 266. The tract at residues 271–275 (TRNAR) is RNA binding; important for wobble base 34 recognition. Residues cysteine 304, cysteine 306, cysteine 309, and histidine 335 each coordinate Zn(2+).

Belongs to the queuine tRNA-ribosyltransferase family. As to quaternary structure, homodimer. Within each dimer, one monomer is responsible for RNA recognition and catalysis, while the other monomer binds to the replacement base PreQ1. It depends on Zn(2+) as a cofactor.

It carries out the reaction 7-aminomethyl-7-carbaguanine + guanosine(34) in tRNA = 7-aminomethyl-7-carbaguanosine(34) in tRNA + guanine. Its pathway is tRNA modification; tRNA-queuosine biosynthesis. Its function is as follows. Catalyzes the base-exchange of a guanine (G) residue with the queuine precursor 7-aminomethyl-7-deazaguanine (PreQ1) at position 34 (anticodon wobble position) in tRNAs with GU(N) anticodons (tRNA-Asp, -Asn, -His and -Tyr). Catalysis occurs through a double-displacement mechanism. The nucleophile active site attacks the C1' of nucleotide 34 to detach the guanine base from the RNA, forming a covalent enzyme-RNA intermediate. The proton acceptor active site deprotonates the incoming PreQ1, allowing a nucleophilic attack on the C1' of the ribose to form the product. After dissociation, two additional enzymatic reactions on the tRNA convert PreQ1 to queuine (Q), resulting in the hypermodified nucleoside queuosine (7-(((4,5-cis-dihydroxy-2-cyclopenten-1-yl)amino)methyl)-7-deazaguanosine). This is Queuine tRNA-ribosyltransferase from Vibrio cholerae serotype O1 (strain ATCC 39315 / El Tor Inaba N16961).